We begin with the raw amino-acid sequence, 393 residues long: Riboflavin biosynthesis protein RibBA (393 aa).

A DHBP synthase region spans residues 1-200; that stretch reads MEFDEIKDAL…IESLVNYQKD (200 aa). D-ribulose 5-phosphate contacts are provided by residues 27 to 28, Asp-32, 139 to 143, and Glu-163; these read RE and RTGHT. Residue Glu-28 coordinates Mg(2+). Residue His-142 coordinates Mg(2+). The tract at residues 201–393 is GTP cyclohydrolase II; it reads KDTSVELKAK…TKKIKMGHLI (193 aa). GTP is bound at residue 249-253; sequence RIHSA. The Zn(2+) site is built by Cys-254, Cys-265, and Cys-267. GTP-binding positions include Gln-270, 291 to 293, and Thr-313; that span reads EGR. Asp-325 functions as the Proton acceptor; for GTP cyclohydrolase activity in the catalytic mechanism. Arg-327 functions as the Nucleophile; for GTP cyclohydrolase activity in the catalytic mechanism. GTP-binding residues include Ser-348 and Lys-353.

This sequence in the N-terminal section; belongs to the DHBP synthase family. It in the C-terminal section; belongs to the GTP cyclohydrolase II family. Requires Mg(2+) as cofactor. Mn(2+) serves as cofactor. Zn(2+) is required as a cofactor.

It catalyses the reaction D-ribulose 5-phosphate = (2S)-2-hydroxy-3-oxobutyl phosphate + formate + H(+). The enzyme catalyses GTP + 4 H2O = 2,5-diamino-6-hydroxy-4-(5-phosphoribosylamino)-pyrimidine + formate + 2 phosphate + 3 H(+). It functions in the pathway cofactor biosynthesis; riboflavin biosynthesis; 2-hydroxy-3-oxobutyl phosphate from D-ribulose 5-phosphate: step 1/1. It participates in cofactor biosynthesis; riboflavin biosynthesis; 5-amino-6-(D-ribitylamino)uracil from GTP: step 1/4. Catalyzes the conversion of D-ribulose 5-phosphate to formate and 3,4-dihydroxy-2-butanone 4-phosphate. Its function is as follows. Catalyzes the conversion of GTP to 2,5-diamino-6-ribosylamino-4(3H)-pyrimidinone 5'-phosphate (DARP), formate and pyrophosphate. The protein is Riboflavin biosynthesis protein RibBA of Staphylococcus haemolyticus (strain JCSC1435).